A 448-amino-acid chain; its full sequence is tRNA(Ile)-lysidine synthase (448 aa).

Position 25 to 30 (25 to 30) interacts with ATP; the sequence is SGGSDS.

It belongs to the tRNA(Ile)-lysidine synthase family.

The protein localises to the cytoplasm. It carries out the reaction cytidine(34) in tRNA(Ile2) + L-lysine + ATP = lysidine(34) in tRNA(Ile2) + AMP + diphosphate + H(+). Ligates lysine onto the cytidine present at position 34 of the AUA codon-specific tRNA(Ile) that contains the anticodon CAU, in an ATP-dependent manner. Cytidine is converted to lysidine, thus changing the amino acid specificity of the tRNA from methionine to isoleucine. This Brucella canis (strain ATCC 23365 / NCTC 10854 / RM-666) protein is tRNA(Ile)-lysidine synthase.